The chain runs to 773 residues: DNA gyrase subunit B (773 aa).

A Toprim domain is found at 416–530 (SEIFLVEGDS…QGHVYIAQAP (115 aa)). Residues Glu422, Asp495, and Asp497 each coordinate Mg(2+).

Belongs to the type II topoisomerase GyrB family. In terms of assembly, heterotetramer, composed of two GyrA and two GyrB chains. In the heterotetramer, GyrA contains the active site tyrosine that forms a transient covalent intermediate with DNA, while GyrB binds cofactors and catalyzes ATP hydrolysis. Requires Mg(2+) as cofactor. The cofactor is Mn(2+). It depends on Ca(2+) as a cofactor.

It is found in the cytoplasm. It catalyses the reaction ATP-dependent breakage, passage and rejoining of double-stranded DNA.. Its function is as follows. A type II topoisomerase that negatively supercoils closed circular double-stranded (ds) DNA in an ATP-dependent manner to modulate DNA topology and maintain chromosomes in an underwound state. Negative supercoiling favors strand separation, and DNA replication, transcription, recombination and repair, all of which involve strand separation. Also able to catalyze the interconversion of other topological isomers of dsDNA rings, including catenanes and knotted rings. Type II topoisomerases break and join 2 DNA strands simultaneously in an ATP-dependent manner. The protein is DNA gyrase subunit B of Helicobacter pylori (strain ATCC 700392 / 26695) (Campylobacter pylori).